Consider the following 301-residue polypeptide: Acetylglutamate kinase (301 aa).

Substrate is bound by residues Gly71–Gly72, Arg93, and Asn198.

The protein belongs to the acetylglutamate kinase family. ArgB subfamily.

Its subcellular location is the cytoplasm. It carries out the reaction N-acetyl-L-glutamate + ATP = N-acetyl-L-glutamyl 5-phosphate + ADP. It participates in amino-acid biosynthesis; L-arginine biosynthesis; N(2)-acetyl-L-ornithine from L-glutamate: step 2/4. In terms of biological role, catalyzes the ATP-dependent phosphorylation of N-acetyl-L-glutamate. The protein is Acetylglutamate kinase of Zymomonas mobilis subsp. mobilis (strain ATCC 31821 / ZM4 / CP4).